Reading from the N-terminus, the 319-residue chain is Methionyl-tRNA formyltransferase (319 aa).

114-117 (SLLP) provides a ligand contact to (6S)-5,6,7,8-tetrahydrofolate.

The protein belongs to the Fmt family.

It catalyses the reaction L-methionyl-tRNA(fMet) + (6R)-10-formyltetrahydrofolate = N-formyl-L-methionyl-tRNA(fMet) + (6S)-5,6,7,8-tetrahydrofolate + H(+). In terms of biological role, attaches a formyl group to the free amino group of methionyl-tRNA(fMet). The formyl group appears to play a dual role in the initiator identity of N-formylmethionyl-tRNA by promoting its recognition by IF2 and preventing the misappropriation of this tRNA by the elongation apparatus. This Acinetobacter baylyi (strain ATCC 33305 / BD413 / ADP1) protein is Methionyl-tRNA formyltransferase.